Reading from the N-terminus, the 336-residue chain is Protein-arginine kinase (336 aa).

Positions 22 to 245 constitute a Phosphagen kinase C-terminal domain; the sequence is IVMSSRIRLA…QQIINEEMQI (224 aa). ATP-binding positions include 25 to 29, His-83, Arg-116, 167 to 171, and 198 to 203; these read SSRIR, RASVM, and RGIYGE.

It belongs to the ATP:guanido phosphotransferase family.

It carries out the reaction L-arginyl-[protein] + ATP = N(omega)-phospho-L-arginyl-[protein] + ADP + H(+). Catalyzes the specific phosphorylation of arginine residues in proteins. The sequence is that of Protein-arginine kinase from Staphylococcus saprophyticus subsp. saprophyticus (strain ATCC 15305 / DSM 20229 / NCIMB 8711 / NCTC 7292 / S-41).